A 598-amino-acid chain; its full sequence is Beta-hexosaminidase A (598 aa).

The first 11 residues, methionine 1–alanine 11, serve as a signal peptide directing secretion. The active site involves aspartate 305.

This sequence belongs to the glycosyl hydrolase 3 family.

The catalysed reaction is Hydrolysis of terminal non-reducing N-acetyl-D-hexosamine residues in N-acetyl-beta-D-hexosaminides.. Most active towards p-nitrophenyl-N-acetyl-beta-D-glucosaminide(PNP-beta-GlcNAc) and diacetylchitobiose. This Pseudoalteromonas piscicida protein is Beta-hexosaminidase A (cht60).